The primary structure comprises 951 residues: Multiple C2 and transmembrane domain-containing protein 1 (951 aa).

Disordered stretches follow at residues 29-79 (LGVG…RWSG), 92-117 (SSSQ…AEQG), 129-198 (LPVA…QKSS), and 210-231 (LEPA…ALQK). The span at 31 to 43 (VGKGKGGGGGRAG) shows a compositional bias: gly residues. Residues 147–168 (PGGRSPDSAPSSSSASSSLSSS) show a composition bias toward low complexity. Residues 174–184 (RGDRVRDESTR) show a composition bias toward basic and acidic residues. Residues 219–228 (PARGPAEPQA) are compositionally biased toward low complexity. 3 consecutive C2 domains span residues 240 to 358 (KIST…DVTL), 404 to 521 (QTQS…KLEL), and 555 to 676 (QKER…AYVL). Asp275, Asp281, Asp328, Asp330, Asp336, Asp438, Asp444, Asp491, Asp493, Asp499, Asp594, Asp600, Asp646, Asp648, and Asp654 together coordinate Ca(2+). 2 consecutive transmembrane segments (helical) span residues 763–783 (FVLF…LLLL) and 866–886 (PFLS…LYFI).

This sequence belongs to the MCTP family. It depends on Ca(2+) as a cofactor.

Its subcellular location is the cytoplasmic vesicle. The protein localises to the secretory vesicle. It localises to the synaptic vesicle membrane. The protein resides in the recycling endosome. It is found in the endoplasmic reticulum membrane. Calcium sensor which is essential for the stabilization of normal baseline neurotransmitter release and for the induction and long-term maintenance of presynaptic homeostatic plasticity. This chain is Multiple C2 and transmembrane domain-containing protein 1, found in Mus musculus (Mouse).